The primary structure comprises 528 residues: DEAD-box ATP-dependent RNA helicase 6 (528 aa).

Composition is skewed to low complexity over residues 1–15 (MNNN…PPGI) and 65–80 (QQYV…QQQQ). The segment at 1–80 (MNNNNNNRGR…GYPQQIQQQQ (80 aa)) is disordered. Positions 154–182 (NEFEDYFLKRDLLRGIYEKGFEKPSPIQE) match the Q motif motif. Residues 185 to 355 (IPIALTGSDI…DRYLKKPYII (171 aa)) form the Helicase ATP-binding domain. Residue 198-205 (AKNGTGKT) participates in ATP binding. T260 carries the post-translational modification Phosphothreonine. The DEAD box signature appears at 303–306 (DEAD). The region spanning 365 to 525 (GVTQYYAFVE…PIPSLIDKAI (161 aa)) is the Helicase C-terminal domain.

Belongs to the DEAD box helicase family. DDX6/DHH1 subfamily.

The protein localises to the cytoplasm. It localises to the P-body. The enzyme catalyses ATP + H2O = ADP + phosphate + H(+). Functionally, ATP-dependent RNA helicase involved in mRNA turnover, and more specifically in mRNA decapping. The sequence is that of DEAD-box ATP-dependent RNA helicase 6 (RH6) from Arabidopsis thaliana (Mouse-ear cress).